The sequence spans 357 residues: Phospho-N-acetylmuramoyl-pentapeptide-transferase (357 aa).

A run of 10 helical transmembrane segments spans residues Ala-23–Tyr-43, Thr-70–Leu-90, Ser-91–Ile-111, Leu-127–Ile-147, Tyr-171–Thr-191, Gly-196–Ser-216, Leu-236–Tyr-256, Val-260–Leu-280, Leu-286–Ile-306, and Leu-334–Leu-354.

The protein belongs to the glycosyltransferase 4 family. MraY subfamily. Mg(2+) is required as a cofactor.

It is found in the cell inner membrane. It carries out the reaction UDP-N-acetyl-alpha-D-muramoyl-L-alanyl-gamma-D-glutamyl-meso-2,6-diaminopimeloyl-D-alanyl-D-alanine + di-trans,octa-cis-undecaprenyl phosphate = di-trans,octa-cis-undecaprenyl diphospho-N-acetyl-alpha-D-muramoyl-L-alanyl-D-glutamyl-meso-2,6-diaminopimeloyl-D-alanyl-D-alanine + UMP. Its pathway is cell wall biogenesis; peptidoglycan biosynthesis. Its function is as follows. Catalyzes the initial step of the lipid cycle reactions in the biosynthesis of the cell wall peptidoglycan: transfers peptidoglycan precursor phospho-MurNAc-pentapeptide from UDP-MurNAc-pentapeptide onto the lipid carrier undecaprenyl phosphate, yielding undecaprenyl-pyrophosphoryl-MurNAc-pentapeptide, known as lipid I. The chain is Phospho-N-acetylmuramoyl-pentapeptide-transferase from Buchnera aphidicola subsp. Acyrthosiphon pisum (strain 5A).